A 559-amino-acid chain; its full sequence is MAAQGSLLIASFLLILLVLAKPLGSGLARLIAASPLPGVAGVERVLWRTLGITGHEMNWRQYLLALLTLNLLGLSILFCLLFWQEWLPLNPQRLPGLSWDLALNTAVSFVTNTNWQAYSGESTLSYFSQMAGLTVQNFLSAATGIAVVFALIRAFTRQNMHTLGNAWQDLVRITLWILFPVALIIALFFIQQGVLQNLSAYQPITTLEGAQQLLPMGPVASQEAIKMLGTNGGGFFNANSSHPFENPTALTNMVQMLAIFLIPAALCFAFGEAAGDRRQGRALLWAMSFIFVVCVAVVMWAEVQGNPHLLTAGADSSVNMEGKETRFGVLASSLFAVVTTAASCGAVDAMHDSFTALGGMVPMWLMQIGEVVFGGVGSGLYGMLLFVLLAVFIAGLMIGRTPEYLGKKIDVREMKMTALAILVTPMLVLLGSALAMMTDAGRSAMLNPGPHGFSEVLYAVSSAANNNGSAFAGLSANSPFWNCLLAFCMFVGRFGVIIPVMAIAGSLVSKKAQPASQGTLATHGALFIGLLIGTVLLVGALTFIPALALGPVAEHFSLP.

12 consecutive transmembrane segments (helical) span residues 7 to 27 (LLIASFLLILLVLAKPLGSGL), 63 to 83 (LLALLTLNLLGLSILFCLLFW), 132 to 152 (GLTVQNFLSAATGIAVVFALI), 170 to 190 (LVRITLWILFPVALIIALFFI), 253 to 273 (MVQMLAIFLIPAALCFAFGEA), 283 to 303 (LLWAMSFIFVVCVAVVMWAEV), 327 to 347 (FGVLASSLFAVVTTAASCGAV), 356 to 376 (ALGGMVPMWLMQIGEVVFGGV), 379 to 399 (GLYGMLLFVLLAVFIAGLMIG), 416 to 436 (MTALAILVTPMLVLLGSALAM), 484 to 504 (LLAFCMFVGRFGVIIPVMAIA), and 524 to 544 (GALFIGLLIGTVLLVGALTFI).

It belongs to the KdpA family. In terms of assembly, the system is composed of three essential subunits: KdpA, KdpB and KdpC.

It localises to the cell inner membrane. Its function is as follows. Part of the high-affinity ATP-driven potassium transport (or Kdp) system, which catalyzes the hydrolysis of ATP coupled with the electrogenic transport of potassium into the cytoplasm. This subunit binds the periplasmic potassium ions and delivers the ions to the membrane domain of KdpB through an intramembrane tunnel. The chain is Potassium-transporting ATPase potassium-binding subunit from Salmonella arizonae (strain ATCC BAA-731 / CDC346-86 / RSK2980).